Reading from the N-terminus, the 846-residue chain is MRIKRREFLKASAAVGAVAVASPTLNAFAQTGTGASAMGEAEGKWIPSTCQGCTTWCPVEFLFRMAVRSKYAATQLSKANNGYCCVRGHLMLQQLYDPDRIKTPMKRTNPVKGRKEDPKICPYHMGMKQWDTIADKIMELRKNNETHKYLLMRGRYSDHNSIFYGDLTKMIGSPNNISHSAICAEVEKMGSMATEGFWGYRDYDLDNMKYLIAWACDPLSSNRQIPNAIRKIQGVMDRGKVVAVDPRMNNTASKAQEWLPIKPSEDGALALAMAHVIITKGLWSKEFVGDFKDGKNKFVAGKTVKEEDFEEKLTNGIVKWWNLEVKDRTPKWAAKVTGIDEATIIRVATEFAQAAPACAIWYGPNMQPRGSYAVMCIHALNGLVGASDSEGGLCTGMGSPSSSYPKIDAYQDDVAKAGAKNKKIDQRGTLKFPAMGSAKPGTGVVTNNVADALLAADPYDIKVAIGYFCNFNFSGTDGARWDKALAKVPFFVHCVPMFSEMTYFADIVLPAALHHTEDWAVIRSKANLHGHTSIQQPVVERMFDVKGVETEITWLLAEKLKAKGFENMYNWLYNEYKDPETGKNPTNSLEFALYATKIRSKKCWDPKENAEYKGDKLNGWADFMEKGIVNSPKFKFRQKWEKGFPTETKKFEFYSETLKKGLLAHAEKNKVTVDQVMEATNYEARGELAFIPHYESPKRHGDVKEFPFSLIDMKSRLNREGRSTNATWYHAFKKCDPGDVNQEDVLQINPADAKKLGINEGDMVKVTSVIGSLTVKARLWEGVRPGCVAKCYGQGHFAMGRVSAKDFGKAVARGANFNDIMPADYDRITGATARNGGFTGVKIEKA.

The tat-type signal signal peptide spans 1 to 29 (MRIKRREFLKASAAVGAVAVASPTLNAFA). One can recognise a 4Fe-4S Mo/W bis-MGD-type domain in the interval 43-99 (GKWIPSTCQGCTTWCPVEFLFRMAVRSKYAATQLSKANNGYCCVRGHLMLQQLYDPD). The [4Fe-4S] cluster site is built by C50, C53, C57, and C85. R155 contributes to the arsenite binding site. Y156 lines the arsenate pocket. H179 contacts arsenite. Residue S180 participates in arsenate binding. A Mo-bis(molybdopterin guanine dinucleotide)-binding site is contributed by C183. Residue K188 coordinates arsenate. Residue Y200 participates in arsenite binding.

Belongs to the prokaryotic molybdopterin-containing oxidoreductase family. In terms of assembly, heterodimer composed of one large subunit (ArrA) and one small subunit (ArrB). Requires [4Fe-4S] cluster as cofactor. It depends on Mo-bis(molybdopterin guanine dinucleotide) as a cofactor. Post-translationally, predicted to be exported by the Tat system. The position of the signal peptide cleavage has been experimentally proven.

It is found in the periplasm. The enzyme catalyses arsenite + A + H2O = arsenate + AH2 + H(+). Functionally, component of the arsenate respiratory reductase (Arr) complex, which catalyzes the reduction of arsenate (As(V)) to arsenite (As(III)). Can use acetate as the electron donor. ArrA is the arsenate-binding subunit. This is Arsenate respiratory reductase molybdopterin-containing subunit ArrA from Chrysiogenes arsenatis.